Here is a 509-residue protein sequence, read N- to C-terminus: Histone deacetylase 2 (509 aa).

The segment at 24–338 (RRVCYFYDPE…WCYETGVALG (315 aa)) is histone deacetylase. The active-site Proton donor/acceptor is histidine 158. The Zn(2+) site is built by aspartate 193, histidine 195, and aspartate 281. Residues 394–509 (PSVQFEERIP…NAKNEPGSSL (116 aa)) are disordered. Composition is skewed to basic and acidic residues over residues 398–409 (FEERIPETKLPE), 418–434 (DERHDPDSDMLLDDHKP), and 448–472 (VKREITETETKDQHGKRLTTEHKVP). A compositionally biased stretch (polar residues) spans 481–494 (SSKQVPTADANSMA).

This sequence belongs to the histone deacetylase family. HD Type 1 subfamily. Requires Zn(2+) as cofactor. As to expression, expressed in roots.

The protein resides in the nucleus. The enzyme catalyses N(6)-acetyl-L-lysyl-[histone] + H2O = L-lysyl-[histone] + acetate. Responsible for the deacetylation of lysine residues on the N-terminal part of the core histones (H2A, H2B, H3 and H4). Histone deacetylation gives a tag for epigenetic repression and plays an important role in transcriptional regulation, cell cycle progression and developmental events. Histone deacetylases act via the formation of large multiprotein complexes. In Oryza sativa subsp. japonica (Rice), this protein is Histone deacetylase 2.